Reading from the N-terminus, the 303-residue chain is ATP synthase gamma chain (303 aa).

The protein belongs to the ATPase gamma chain family. In terms of assembly, F-type ATPases have 2 components, CF(1) - the catalytic core - and CF(0) - the membrane proton channel. CF(1) has five subunits: alpha(3), beta(3), gamma(1), delta(1), epsilon(1). CF(0) has three main subunits: a, b and c.

Its subcellular location is the cell inner membrane. In terms of biological role, produces ATP from ADP in the presence of a proton gradient across the membrane. The gamma chain is believed to be important in regulating ATPase activity and the flow of protons through the CF(0) complex. The sequence is that of ATP synthase gamma chain from Bartonella quintana (strain Toulouse) (Rochalimaea quintana).